Consider the following 240-residue polypeptide: NADH-quinone oxidoreductase subunit I 2 (240 aa).

2 4Fe-4S ferredoxin-type domains span residues Thr-57–His-86 and Asp-97–Asp-126. 8 residues coordinate [4Fe-4S] cluster: Cys-66, Cys-69, Cys-72, Cys-76, Cys-106, Cys-109, Cys-112, and Cys-116. Positions Ile-185–Pro-240 are disordered. Over residues Tyr-198–Glu-211 the composition is skewed to basic and acidic residues. Residues Glu-215–Gly-230 show a composition bias toward low complexity.

This sequence belongs to the complex I 23 kDa subunit family. In terms of assembly, NDH-1 is composed of 14 different subunits. Subunits NuoA, H, J, K, L, M, N constitute the membrane sector of the complex. [4Fe-4S] cluster is required as a cofactor.

The protein localises to the cell membrane. It catalyses the reaction a quinone + NADH + 5 H(+)(in) = a quinol + NAD(+) + 4 H(+)(out). In terms of biological role, NDH-1 shuttles electrons from NADH, via FMN and iron-sulfur (Fe-S) centers, to quinones in the respiratory chain. The immediate electron acceptor for the enzyme in this species is believed to be ubiquinone. Couples the redox reaction to proton translocation (for every two electrons transferred, four hydrogen ions are translocated across the cytoplasmic membrane), and thus conserves the redox energy in a proton gradient. The protein is NADH-quinone oxidoreductase subunit I 2 of Symbiobacterium thermophilum (strain DSM 24528 / JCM 14929 / IAM 14863 / T).